Reading from the N-terminus, the 379-residue chain is All-trans-retinol dehydrogenase [NAD(+)] ADH4 (379 aa).

Threonine 1 carries the N-acetylthreonine modification. Zn(2+) is bound by residues cysteine 46, histidine 68, cysteine 98, cysteine 101, cysteine 104, cysteine 112, and cysteine 179. Residues 204–209 (GLGGVG), aspartate 228, lysine 233, 297–299 (VGV), and arginine 374 each bind NAD(+).

The protein belongs to the zinc-containing alcohol dehydrogenase family. Class-II subfamily. Homodimer. It depends on Zn(2+) as a cofactor.

The protein localises to the cytoplasm. The enzyme catalyses all-trans-retinol + NAD(+) = all-trans-retinal + NADH + H(+). It catalyses the reaction 9-cis-retinol + NAD(+) = 9-cis-retinal + NADH + H(+). It carries out the reaction 20-oxo-(5Z,8Z,11Z,14Z)-eicosatetraenoate + NAD(+) + H2O = (5Z,8Z,11Z,14Z)-eicosatetraenedioate + NADH + 2 H(+). The catalysed reaction is 20-hydroxy-(5Z,8Z,11Z,14Z)-eicosatetraenoate + NAD(+) = 20-oxo-(5Z,8Z,11Z,14Z)-eicosatetraenoate + NADH + H(+). The enzyme catalyses 1,4-benzoquinone + NADH + H(+) = hydroquinone + NAD(+). Its activity is regulated as follows. Oxidation of 20-HETE is inhibited by low concentrations of N-heptylformamide. Oxidation of 20-HETE is a decreased by 55-65% by either all-trans-retinol or all-trans-retinoic acid. Strongly inhibited by omega-hydroxy fatty acids. Functionally, catalyzes the NAD-dependent oxidation of either all-trans-retinol or 9-cis-retinol. Also oxidizes long chain omega-hydroxy fatty acids, such as 20-HETE, producing both the intermediate aldehyde, 20-oxoarachidonate and the end product, a dicarboxylic acid, (5Z,8Z,11Z,14Z)-eicosatetraenedioate. Also catalyzes the reduction of benzoquinones. The protein is All-trans-retinol dehydrogenase [NAD(+)] ADH4 of Struthio camelus (Common ostrich).